Consider the following 121-residue polypeptide: NADH-quinone oxidoreductase subunit A (121 aa).

The next 3 membrane-spanning stretches (helical) occupy residues 8-28 (YLPI…TIIG), 65-85 (LVAI…PWAI), and 93-113 (QGMI…FYII).

Belongs to the complex I subunit 3 family. NDH-1 is composed of 14 different subunits. Subunits NuoA, H, J, K, L, M, N constitute the membrane sector of the complex.

The protein resides in the cell inner membrane. The catalysed reaction is a quinone + NADH + 5 H(+)(in) = a quinol + NAD(+) + 4 H(+)(out). In terms of biological role, NDH-1 shuttles electrons from NADH, via FMN and iron-sulfur (Fe-S) centers, to quinones in the respiratory chain. The immediate electron acceptor for the enzyme in this species is believed to be a menaquinone. Couples the redox reaction to proton translocation (for every two electrons transferred, four hydrogen ions are translocated across the cytoplasmic membrane), and thus conserves the redox energy in a proton gradient. The protein is NADH-quinone oxidoreductase subunit A of Flavobacterium psychrophilum (strain ATCC 49511 / DSM 21280 / CIP 103535 / JIP02/86).